The chain runs to 250 residues: 2,3-bisphosphoglycerate-dependent phosphoglycerate mutase (250 aa).

Residues 10–17 (RHGESQWN), 23–24 (TG), arginine 62, 89–92 (ERHY), lysine 100, 116–117 (RR), and 185–186 (GN) each bind substrate. Histidine 11 functions as the Tele-phosphohistidine intermediate in the catalytic mechanism. The active-site Proton donor/acceptor is glutamate 89.

It belongs to the phosphoglycerate mutase family. BPG-dependent PGAM subfamily. As to quaternary structure, homodimer.

The enzyme catalyses (2R)-2-phosphoglycerate = (2R)-3-phosphoglycerate. It functions in the pathway carbohydrate degradation; glycolysis; pyruvate from D-glyceraldehyde 3-phosphate: step 3/5. In terms of biological role, catalyzes the interconversion of 2-phosphoglycerate and 3-phosphoglycerate. The sequence is that of 2,3-bisphosphoglycerate-dependent phosphoglycerate mutase from Shigella boydii serotype 4 (strain Sb227).